Consider the following 33-residue polypeptide: Large ribosomal subunit protein eL21 (33 aa).

The protein belongs to the eukaryotic ribosomal protein eL21 family. Component of the large ribosomal subunit.

It localises to the cytoplasm. The protein localises to the cytosol. The protein resides in the endoplasmic reticulum. Component of the large ribosomal subunit. The ribosome is a large ribonucleoprotein complex responsible for the synthesis of proteins in the cell. This chain is Large ribosomal subunit protein eL21 (rpl21), found in Xenopus laevis (African clawed frog).